A 658-amino-acid chain; its full sequence is Staphylocoagulase (658 aa).

Residues 1-26 (MKKQIISLGALAVASSLFTWDNKADA) form the signal peptide. Polar residues-rich tracts occupy residues 391–406 (MEQNRPSLSDNYTQPT), 428–440 (GTESTLKGIQGES), 499–514 (PSETNAYNVTTNQDGT), and 521–531 (PTQNKPSETNA). The segment at 391–531 (MEQNRPSLSD…TQNKPSETNA (141 aa)) is disordered. 6 consecutive repeat copies span residues 492–518 (ARPRFNKPSETNAYNVTTNQDGTVSYG), 519–545 (ARPTQNKPSETNAYNVTTHANGQVSYG), 546–572 (ARPTQNKPSKTNAYNVTTHANGQVSYG), 573–599 (ARPTQKKPSKTNAYNVTTHANGQVSYG), 600–626 (ARPTYKKPSETNAYNVTTHANGQVSYG), and 627–653 (ARPTQKKPSETNAYNVTTHADGTATYG). Residues 492–653 (ARPRFNKPSE…THADGTATYG (162 aa)) are 6 X 27 AA tandem repeats of A-R-P-[RT]-[FQY]-[NK]-K-P-S-[EK]-T-N-A-Y-N-V-T-T-[NH]-[QA]-[DN]-G-[TQ]-[VA]-[ST]-Y-G. A disordered region spans residues 619-658 (ANGQVSYGARPTQKKPSETNAYNVTTHADGTATYGPRVTK). Residues 636–646 (ETNAYNVTTHA) show a composition bias toward polar residues.

The protein belongs to the staphylocoagulase family.

Its function is as follows. Staphylocoagulase is an extracellular protein which specifically forms a complex with human prothrombin. This complex named staphylothrombin can clot fibrinogen without any proteolytic cleavage of prothrombin. This is Staphylocoagulase from Staphylococcus aureus.